We begin with the raw amino-acid sequence, 79 residues long: Sulfur carrier protein TusA (79 aa).

Residue Cys-17 is the Cysteine persulfide intermediate of the active site.

It belongs to the sulfur carrier protein TusA family.

It localises to the cytoplasm. Sulfur carrier protein which probably makes part of a sulfur-relay system. In Actinobacillus pleuropneumoniae serotype 5b (strain L20), this protein is Sulfur carrier protein TusA.